The primary structure comprises 111 residues: Small ribosomal subunit protein uS10 (111 aa).

This sequence belongs to the universal ribosomal protein uS10 family. In terms of assembly, part of the 30S ribosomal subunit.

In terms of biological role, involved in the binding of tRNA to the ribosomes. The chain is Small ribosomal subunit protein uS10 from Protochlamydia amoebophila (strain UWE25).